The following is an 872-amino-acid chain: MKQLSSAQVRQMWLDFWATKGHSVEPSVSLVPVNDPTLLWINSGVATLKKYFDGTIIPENPRITNAQKAIRTNDIENVGKTARHHTMFEMLGNFSIGDYFRDEAITWAYELLTSPEWFDFPAEKLYMTYYPDDKDSYNRWIEVGVDPSHLIPIEDNFWEIGAGPSGPDTEIFFDRGEAFDPENIGLRLLAEDIENDRYIEIWNIVLSQFNADPAVPRSEYKELPHKNIDTGAGLERLVAVIQGAKTNFETDLFMPIIREVEKLSGKVYDQDGDNMSFKVIADHIRSLSFAIGDGALPGNEGRGYVLRRLLRRASMHGQKLGINEPFLYKLVPTVGKIMESYYPEVLEKRDFIEKIVKSEEESFARTLHSGQHFAQGIVADLKEKGQSVIAGQDVFKLYDTYGFPVELTEEIAEEAGMTVDREGFEAAMKEQQERARASAVKGGSMGMQNETLQNITVESVFNYNTSQLSSKLVAIVADNAEVGAVSEGTASLIFAETSFYAEMGGQVADYGQILDESGKIVATVTNVQKAPNGQALHTVEVLAPLALNQEYTLAIDSNRRHRVMKNHTATHLLHAALHNILGNHATQAGSLNEVEFLRFDFTHFQAVTAEELRAIEQQVNEKIWEALEVKTVETDIDTAKEMGAMALFGEKYGKEVRVVTIGDYSIELCGGTHVDNTSEIGLFKIVKEEGIGSGTRRILAVTGKEAFEAYREQEDALKAIAATLKAPQVKEVPHKVEGLQEQLRQLQKENAELKEKAAAAAAGDIFKDVKEVNGHRYIASQVSVSDAGALRTFADNWKQKDYSDLLVLVAAIGDKVNVLVASKTKDLHAGNLVKELAPIIDGRGGGKPDMAMAGGSNQPKIQELLDAVAGKL.

Zn(2+) is bound by residues histidine 567, histidine 571, cysteine 669, and histidine 673.

Belongs to the class-II aminoacyl-tRNA synthetase family. Zn(2+) serves as cofactor.

The protein localises to the cytoplasm. The catalysed reaction is tRNA(Ala) + L-alanine + ATP = L-alanyl-tRNA(Ala) + AMP + diphosphate. Catalyzes the attachment of alanine to tRNA(Ala) in a two-step reaction: alanine is first activated by ATP to form Ala-AMP and then transferred to the acceptor end of tRNA(Ala). Also edits incorrectly charged Ser-tRNA(Ala) and Gly-tRNA(Ala) via its editing domain. The sequence is that of Alanine--tRNA ligase from Streptococcus pneumoniae serotype 2 (strain D39 / NCTC 7466).